The sequence spans 343 residues: MSKKQKIAIVGATGAVGEELLNVLDELDFPVESILPLASAKSVGSEVEFKGKAYKVKELTENVFKENPIDIAFFSAGGSVSEKYAKFAVESGAVVIDNTSHFRMEKDVPLVVPECNPEDIKDWKKTGIIANPNCSTIQMVQVLKPLNDAFNLKRVDVSTYQAASGAGKEGMQELVEAMQSFFAFKLDEFEPQTFPYTLALNLIPQIDVFMDNDYTKEELKMVNETQKILHKNLEVSATCVRVPVLRSHSEAITMHFEKEIDVKKAKEILKKAPSVIVIDDPKNKKYPMPLMTSDTNETYVGRIRADVYDKKILHLWCVADQIRVGAATNAVRIAQKWLELKNK.

NADP(+) contacts are provided by residues 13 to 16 (TGAV) and 41 to 42 (KS). Residue arginine 103 participates in phosphate binding. Cysteine 134 acts as the Acyl-thioester intermediate in catalysis. Residue glutamine 161 participates in substrate binding. 164–165 (SG) contacts NADP(+). A phosphate-binding site is contributed by lysine 220. Arginine 241 contributes to the substrate binding site. Histidine 248 functions as the Proton acceptor in the catalytic mechanism. Residue glutamine 321 participates in NADP(+) binding.

This sequence belongs to the aspartate-semialdehyde dehydrogenase family. Homodimer.

The catalysed reaction is L-aspartate 4-semialdehyde + phosphate + NADP(+) = 4-phospho-L-aspartate + NADPH + H(+). Its pathway is amino-acid biosynthesis; L-lysine biosynthesis via DAP pathway; (S)-tetrahydrodipicolinate from L-aspartate: step 2/4. The protein operates within amino-acid biosynthesis; L-methionine biosynthesis via de novo pathway; L-homoserine from L-aspartate: step 2/3. It functions in the pathway amino-acid biosynthesis; L-threonine biosynthesis; L-threonine from L-aspartate: step 2/5. In terms of biological role, catalyzes the NADPH-dependent formation of L-aspartate-semialdehyde (L-ASA) by the reductive dephosphorylation of L-aspartyl-4-phosphate. The protein is Aspartate-semialdehyde dehydrogenase of Campylobacter jejuni subsp. jejuni serotype O:2 (strain ATCC 700819 / NCTC 11168).